The following is a 343-amino-acid chain: MAGGRPHLKRSFSIIPCFVFVESVLLGIVVLLAYRLEFTDTFPVHTQGFFCYDSAYAKPYPGPEAASRAPPALIYALVTAGPTLTILLGELARAFFPAPPSSSPVSGESTIVSGACCRFSPPLRRLVRFLGVYSFGLFTTTIFANAGQVVTGNPTPHFLSVCRPNYTALGCPPPSPDRPGPDRFVTDQSACAGSPSLVAAARRAFPCKDAALCAYAVTYTAMYVTLVFRVKGSRLVKPSLCLALLCPAFLVGVVRVAEYRNHWSDVLAGFLTGAAIATFLVTCVVHNFQSRPHSGRRLSPWEDLSQAPTMDSPLEKNPRPAGRIRHRHGSPHPSRRTVPAVAT.

The next 3 membrane-spanning stretches (helical) occupy residues 12–32 (FSII…VVLL), 72–92 (ALIY…GELA), and 129–149 (FLGV…AGQV). An N-linked (GlcNAc...) asparagine glycan is attached at N165. The next 3 membrane-spanning stretches (helical) occupy residues 210-230 (AALC…VFRV), 239-259 (SLCL…VAEY), and 266-286 (VLAG…CVVH). The interval 291-343 (RPHSGRRLSPWEDLSQAPTMDSPLEKNPRPAGRIRHRHGSPHPSRRTVPAVAT) is disordered. Residues S299 and S312 each carry the phosphoserine modification. Residues 322–335 (GRIRHRHGSPHPSR) show a composition bias toward basic residues.

It belongs to the PA-phosphatase related phosphoesterase family.

It localises to the membrane. The protein is Phospholipid phosphatase-related protein type 2 of Mus musculus (Mouse).